Consider the following 201-residue polypeptide: Small ribosomal subunit protein uS4c (201 aa).

Residues 15–43 are disordered; that stretch reads LGALPGLTSKRPTPGSDLRNQSRSGKRSQ. The S4 RNA-binding domain occupies 89–149; that stretch reads MRLDNILFRL…DEQKSRALIQ (61 aa).

It belongs to the universal ribosomal protein uS4 family. As to quaternary structure, part of the 30S ribosomal subunit. Contacts protein S5. The interaction surface between S4 and S5 is involved in control of translational fidelity.

The protein resides in the plastid. It is found in the chloroplast. Functionally, one of the primary rRNA binding proteins, it binds directly to 16S rRNA where it nucleates assembly of the body of the 30S subunit. In terms of biological role, with S5 and S12 plays an important role in translational accuracy. The sequence is that of Small ribosomal subunit protein uS4c (rps4) from Nandina domestica (Heavenly bamboo).